Consider the following 437-residue polypeptide: uncharacterized protein (437 aa).

Residues 47–67 (LLIILIGFILLSSISAIQIDA) form a helical membrane-spanning segment.

Its subcellular location is the membrane. This is an uncharacterized protein from Methanocaldococcus jannaschii (strain ATCC 43067 / DSM 2661 / JAL-1 / JCM 10045 / NBRC 100440) (Methanococcus jannaschii).